Reading from the N-terminus, the 154-residue chain is MGNCLKSPTSDDISLLHESQSDRASFGEGTEPDQEPPPPYQEQVPVPVYHPTPSQTRLATQLTEEEQIRIAQRIGLIQHLPKGVYDPGRDGSEKKIRECVICMMDFVYGDPIRFLPCMHIYHLDCIDDWLMRSFTCPSCMEPVDAALLSSYETN.

Polar residues predominate over residues 1–12 (MGNCLKSPTSDD). Positions 1–53 (MGNCLKSPTSDDISLLHESQSDRASFGEGTEPDQEPPPPYQEQVPVPVYHPTP) are disordered. Glycine 2 carries the N-myristoyl glycine lipid modification. Cysteine 4 carries the S-palmitoyl cysteine lipid modification. Serine 14 and serine 25 each carry phosphoserine. The PPxY motif signature appears at 37-40 (PPPY). The span at 41–51 (QEQVPVPVYHP) shows a compositional bias: low complexity. An RING-type zinc finger spans residues 99–140 (CVICMMDFVYGDPIRFLPCMHIYHLDCIDDWLMRSFTCPSCM). Position 135 is a phosphothreonine; by PKB/AKT1 (threonine 135).

Interacts (when phosphorylated) with 14-3-3. Interacts with the E3 ubiquitin-ligases NEDD4, ITCH, SMURF2 and WWP1. Also interacts with the E2 ubiquitin-conjugating enzymes UBE2D1 and UBE2N, but neither with CDC34, nor with UBE2L3. Interacts with ZNF350, EPS15 and STAMBP. After TNF stimulation, interacts with TAX1BP1, TNFAIP3 and RIPK1; these interactions are transient and they are lost after 1 hour of stimulation with TNF. Interacts with GGA1. In terms of processing, ubiquitinated in the presence of ITCH, SMURF2 and UBE2D1, as well as WWP1. Phosphorylation by PKB/AKT1 may accelerate degradation by the proteasome. Post-translationally, acylation at both Gly-2 and Cys-4 is required for proper localization to the endosomes.

Its subcellular location is the early endosome. The protein resides in the recycling endosome. It localises to the cytoplasm. The protein localises to the nucleus. In terms of biological role, essential component of a ubiquitin-editing protein complex, comprising also TNFAIP3, ITCH and TAX1BP1, that ensures the transient nature of inflammatory signaling pathways. Promotes the association of TNFAIP3 to RIPK1 after TNF stimulation. TNFAIP3 deubiquitinates 'Lys-63' polyubiquitin chains on RIPK1 and catalyzes the formation of 'Lys-48'-polyubiquitin chains. This leads to RIPK1 proteasomal degradation and consequently termination of the TNF- or LPS-mediated activation of NF-kappa-B. Recruits STAMBP to the E3 ubiquitin-ligase SMURF2 for ubiquitination, leading to its degradation by the 26S proteasome. The protein is RING finger protein 11 (RNF11) of Bos taurus (Bovine).